The sequence spans 725 residues: A-type inclusion protein A25 (725 aa).

Coiled coils occupy residues 418–521 (GNSG…RNGK) and 547–719 (EIDK…NAET). Tandem repeats lie at residues 609–635 (VRRELEEERRRVRDLESRLDECTRNQE), 636–663 (DTQEVDALRSRIRELENKLTDCIESGGG), 664–687 (NLTEISRLQSKISDLERQLSECRE), and 699–725 (ISDLERQLNDCRRNNETNAETERDATS). Residues 609 to 718 (VRRELEEERR…CRRNNETNAE (110 aa)) are 4 X approximate tandem repeats.

This sequence belongs to the poxviridae A25 protein family. In terms of assembly, interacts (via N-terminus) with protein A26.

It is found in the virion. Structural protein that forms a matrix surrounding the mature virion (MV) through interaction with protein A26. Presence of protein A25 in the virion structurally prevents direct virus-cell fusion mechanism. The polypeptide is A-type inclusion protein A25 (Vaccinia virus (strain Western Reserve) (VACV)).